The primary structure comprises 431 residues: tRNA(Ile)-lysidine synthase (431 aa).

S25–S30 is a binding site for ATP.

Belongs to the tRNA(Ile)-lysidine synthase family.

Its subcellular location is the cytoplasm. It catalyses the reaction cytidine(34) in tRNA(Ile2) + L-lysine + ATP = lysidine(34) in tRNA(Ile2) + AMP + diphosphate + H(+). Ligates lysine onto the cytidine present at position 34 of the AUA codon-specific tRNA(Ile) that contains the anticodon CAU, in an ATP-dependent manner. Cytidine is converted to lysidine, thus changing the amino acid specificity of the tRNA from methionine to isoleucine. This chain is tRNA(Ile)-lysidine synthase, found in Legionella pneumophila (strain Lens).